The chain runs to 360 residues: Chorismate synthase (360 aa).

Position 47 (R47) interacts with NADP(+). FMN is bound by residues 124 to 126 (RSS), 240 to 241 (NA), G285, 300 to 304 (KPVAT), and R326.

Belongs to the chorismate synthase family. In terms of assembly, homotetramer. FMNH2 serves as cofactor.

It catalyses the reaction 5-O-(1-carboxyvinyl)-3-phosphoshikimate = chorismate + phosphate. Its pathway is metabolic intermediate biosynthesis; chorismate biosynthesis; chorismate from D-erythrose 4-phosphate and phosphoenolpyruvate: step 7/7. Catalyzes the anti-1,4-elimination of the C-3 phosphate and the C-6 proR hydrogen from 5-enolpyruvylshikimate-3-phosphate (EPSP) to yield chorismate, which is the branch point compound that serves as the starting substrate for the three terminal pathways of aromatic amino acid biosynthesis. This reaction introduces a second double bond into the aromatic ring system. The sequence is that of Chorismate synthase from Cytophaga hutchinsonii (strain ATCC 33406 / DSM 1761 / CIP 103989 / NBRC 15051 / NCIMB 9469 / D465).